A 525-amino-acid polypeptide reads, in one-letter code: NGFI-A-binding protein 2 (525 aa).

Residues 1–31 (MHRAPSPTAEQPPGRGDNTRRTPQPRFKASA) form a disordered region. At serine 6 the chain carries Phosphoserine. The segment at 35–113 (ALPRTLGELQ…REWATNPGLF (79 aa)) is NCD1. Residues 135 to 238 (GTRKGSMSNG…GAGGGPDRLE (104 aa)) are disordered. Phosphoserine is present on residues serine 157, serine 159, serine 162, and serine 171. Residues 212–234 (AGGGVSEGPGVGGVAAGGAGGGP) show a composition bias toward gly residues. The interval 267–356 (LLKLNKKLAR…SRQVARESTY (90 aa)) is NCD2. Residues 353–384 (ESTYLSSLKGSRLHSEELGGPPLKKLKQEVGE) are necessary for nuclear localization. Residue lysine 379 forms a Glycyl lysine isopeptide (Lys-Gly) (interchain with G-Cter in SUMO1) linkage. The tract at residues 381-416 (EVGEQSHNEIQQPPPGPESYAPPYRPSLEEDSASLS) is disordered. The residue at position 479 (serine 479) is a Phosphoserine. A disordered region spans residues 501-525 (APGPHPALVEGRRSSVKVEAEASRQ). Over residues 510–525 (EGRRSSVKVEAEASRQ) the composition is skewed to basic and acidic residues. Residue lysine 517 forms a Glycyl lysine isopeptide (Lys-Gly) (interchain with G-Cter in SUMO1); alternate linkage. A Glycyl lysine isopeptide (Lys-Gly) (interchain with G-Cter in SUMO2); alternate cross-link involves residue lysine 517.

It belongs to the NAB family. In terms of assembly, homomultimers may associate with EGR1 bound to DNA. In terms of processing, sumoylation by EGR2 represses EGR2 transcriptional activity in hindbrain. In terms of tissue distribution, highly expressed in brain and thymus, and at lower levels in spleen, kidney, heart and testis. Isoform 1 is predominantly expressed in testis, whereas isoform 3 is more abundant in thymus.

Its subcellular location is the nucleus. In terms of biological role, acts as a transcriptional repressor for zinc finger transcription factors EGR1 and EGR2. Isoform 2 lacks repression ability. The polypeptide is NGFI-A-binding protein 2 (Nab2) (Mus musculus (Mouse)).